The sequence spans 277 residues: Ubiquitin-conjugating enzyme suppressor 1 (277 aa).

The segment at 254–277 (RTLACPDETNDNRGSEHYTKRKKI) is disordered.

In terms of biological role, not known; its elevated expression suppresses the conditional cell cycle defects associated with UBC3/CDC34 mutations. This chain is Ubiquitin-conjugating enzyme suppressor 1 (UBS1), found in Saccharomyces cerevisiae (strain ATCC 204508 / S288c) (Baker's yeast).